Reading from the N-terminus, the 311-residue chain is Formimidoylglutamase (311 aa).

6 residues coordinate Mn(2+): His130, Asp155, His157, Asp159, Cys242, and Asp244.

The protein belongs to the arginase family. Mn(2+) is required as a cofactor.

It carries out the reaction N-formimidoyl-L-glutamate + H2O = formamide + L-glutamate. It participates in amino-acid degradation; L-histidine degradation into L-glutamate; L-glutamate from N-formimidoyl-L-glutamate (hydrolase route): step 1/1. In terms of biological role, catalyzes the conversion of N-formimidoyl-L-glutamate to L-glutamate and formamide. The chain is Formimidoylglutamase from Staphylococcus aureus (strain MRSA252).